Here is a 340-residue protein sequence, read N- to C-terminus: KH domain-containing RNA-binding protein QKI (340 aa).

Residues 87-153 (YVPVKEYPDF…WEHLNEDLHV (67 aa)) form the KH domain. Residues 275-278 (PPGP) carry the SH3-binding motif. The short motif at 323 to 329 (RVHPYQR) is the Nuclear localization signal element.

Belongs to the quaking family. Homodimer; does not require RNA to homodimerize.

It localises to the cytoplasm. Its subcellular location is the nucleus. RNA reader protein, which recognizes and binds specific RNAs, thereby regulating RNA metabolic processes, such as pre-mRNA splicing, circular RNA (circRNA) formation, mRNA export, mRNA stability and/or translation. Involved in various cellular processes, such as mRNA storage into stress granules, apoptosis, interferon response, glial cell fate and development. Binds to the 5'-NACUAAY-N(1,20)-UAAY-3' RNA core sequence. Acts as a mRNA modification reader that specifically recognizes and binds mRNA transcripts modified by internal N(7)-methylguanine (m7G). Promotes the formation of circular RNAs (circRNAs): acts by binding to sites flanking circRNA-forming exons. CircRNAs are produced by back-splicing circularization of pre-mRNAs. Required to protect and promote stability of mRNAs which promotes oligodendrocyte differentiation. Acts as an important regulator of muscle development. The polypeptide is KH domain-containing RNA-binding protein QKI (Gallus gallus (Chicken)).